The chain runs to 105 residues: ATP-dependent Clp protease adapter protein ClpS (105 aa).

Belongs to the ClpS family. In terms of assembly, binds to the N-terminal domain of the chaperone ClpA.

Its function is as follows. Involved in the modulation of the specificity of the ClpAP-mediated ATP-dependent protein degradation. This is ATP-dependent Clp protease adapter protein ClpS from Aeromonas salmonicida (strain A449).